The following is a 546-amino-acid chain: Hexose transporter HXT10 (546 aa).

Topologically, residues 1 to 44 are cytoplasmic; the sequence is MVSSSVSILGTSAKASTSLSRKDEIKLTPETREASLDIPYKPII. The helical transmembrane segment at 45 to 65 threads the bilayer; that stretch reads AYWTVMGLCLMIAFGGFIFGW. At 66–100 the chain is on the extracellular side; sequence DTGTISGFINQTDFKRRFGELQRDGSFQLSDVRTG. The N-linked (GlcNAc...) asparagine glycan is linked to Asn-75. The helical transmembrane segment at 101–121 threads the bilayer; sequence LIVGIFNIGCALGGLTLGRLG. Over 122 to 127 the chain is Cytoplasmic; that stretch reads DIYGRK. A helical membrane pass occupies residues 128–148; the sequence is IGLMCVILVYVVGIVIQIASS. Residues 149 to 158 are Extracellular-facing; that stretch reads DKWYQYFIGR. Residues 159–179 form a helical membrane-spanning segment; that stretch reads IVSGMGVGGVAVLSPTLISEI. At 180–185 the chain is on the cytoplasmic side; the sequence is SPKHLR. A helical transmembrane segment spans residues 186-206; that stretch reads GTCVSFYQLMITLGIFLGYCT. At 207-220 the chain is on the extracellular side; sequence NYGTKKYSNSIQWR. A helical membrane pass occupies residues 221 to 241; sequence VPLGLCFAWAIFMVIGMVMVP. Residues 242–324 are Cytoplasmic-facing; that stretch reads ESPRYLVEKG…IQSLQQLTGC (83 aa). The helical transmembrane segment at 325-341 threads the bilayer; that stretch reads NYFFYYGTTIFNAVGMQ. Topologically, residues 342–347 are extracellular; the sequence is DSFETS. Residues 348-365 traverse the membrane as a helical segment; it reads IVLGAVNFASTFVALYIV. Residues 366–372 lie on the Cytoplasmic side of the membrane; the sequence is DKFGRRK. A helical transmembrane segment spans residues 373-393; it reads CLLWGSASMAICFVIFATVGV. The Extracellular portion of the chain corresponds to 394-415; the sequence is TRLWPQGKDQPSSQSAGNVMIV. Residues 416–436 traverse the membrane as a helical segment; it reads FTCFFIFSFAITWAPIAYVIV. Residues 437-453 are Cytoplasmic-facing; sequence AETYPLRVKNRAMAIAV. A helical transmembrane segment spans residues 454–474; it reads GANWMWGFLIGFFTPFITRSI. A topological domain (extracellular) is located at residue Gly-475. Residues 476–496 form a helical membrane-spanning segment; it reads FSYGYVFMGCLIFSYFYVFFF. Residues 497 to 546 are Cytoplasmic-facing; that stretch reads VCETKGLTLEEVNEMYEERIKPWKSGGWIPSSRRTPQPTSSTPLVIVDSK.

This sequence belongs to the major facilitator superfamily. Sugar transporter (TC 2.A.1.1) family.

The protein resides in the membrane. Probable glucose transporter. The chain is Hexose transporter HXT10 (HXT10) from Saccharomyces cerevisiae (strain ATCC 204508 / S288c) (Baker's yeast).